The chain runs to 145 residues: MYPAHLLVLLAVCVSLLGASAIPPLPLNLVQFTYLIQCANKGSRPSYHYADYGCYCGAGGSGTPVDELDRCCKVHDDCYGEAEKMGCYPKLTMYNYYCGTEGPYCNTKTDCQRYVCACDLQAAKCFARSPYNNKNYNIDTSKRCK.

The signal sequence occupies residues M1–A21. Positions I22–L27 are excised as a propeptide. 7 cysteine pairs are disulfide-bonded: C38–C98, C54–C144, C56–C72, C71–C125, C78–C118, C87–C111, and C105–C116. 3 residues coordinate Ca(2+): Y55, G57, and G59. H75 is an active-site residue. D76 contributes to the Ca(2+) binding site. D119 is a catalytic residue.

Belongs to the phospholipase A2 family. Group I subfamily. D49 sub-subfamily. The cofactor is Ca(2+). Expressed by the venom gland.

It localises to the secreted. The enzyme catalyses a 1,2-diacyl-sn-glycero-3-phosphocholine + H2O = a 1-acyl-sn-glycero-3-phosphocholine + a fatty acid + H(+). In terms of biological role, PLA2 catalyzes the calcium-dependent hydrolysis of the 2-acyl groups in 3-sn-phosphoglycerides. The sequence is that of Basic phospholipase A2 cPm08 from Laticauda semifasciata (Black-banded sea krait).